A 103-amino-acid chain; its full sequence is Small ribosomal subunit protein uS10 (103 aa).

Belongs to the universal ribosomal protein uS10 family. In terms of assembly, part of the 30S ribosomal subunit.

Involved in the binding of tRNA to the ribosomes. This is Small ribosomal subunit protein uS10 from Cellvibrio japonicus (strain Ueda107) (Pseudomonas fluorescens subsp. cellulosa).